We begin with the raw amino-acid sequence, 502 residues long: Hexokinase-4 (502 aa).

Residues 4 to 24 traverse the membrane as a helical segment; it reads VLVMLTAAAAVVACSVATVMV. One can recognise a Hexokinase domain in the interval 35–491; sequence RRVVGLLKDL…SSIGSALLLA (457 aa). The interval 90–228 is hexokinase small subdomain; it reads NGSETGTYYA…GLDIRVAALV (139 aa). Glycine 104 and serine 105 together coordinate ADP. Residues threonine 194, lysine 195, asparagine 229, and aspartate 230 each coordinate D-glucose. Residues 229 to 480 form a hexokinase large subdomain region; the sequence is NDTVGALSFG…QHVVVKAMED (252 aa). Position 253 (threonine 253) interacts with ADP. Residues asparagine 256, glutamate 284, and glutamate 315 each coordinate D-glucose. Glycine 445 is a binding site for ADP.

The protein belongs to the hexokinase family.

Its subcellular location is the mitochondrion outer membrane. It catalyses the reaction a D-hexose + ATP = a D-hexose 6-phosphate + ADP + H(+). The catalysed reaction is D-fructose + ATP = D-fructose 6-phosphate + ADP + H(+). It carries out the reaction D-glucose + ATP = D-glucose 6-phosphate + ADP + H(+). Its pathway is carbohydrate metabolism; hexose metabolism. The protein operates within carbohydrate degradation; glycolysis; D-glyceraldehyde 3-phosphate and glycerone phosphate from D-glucose: step 1/4. Its function is as follows. Fructose and glucose phosphorylating enzyme. May be involved in the phosphorylation of glucose during the export from mitochondrion to cytosol. This is Hexokinase-4 from Arabidopsis thaliana (Mouse-ear cress).